Consider the following 146-residue polypeptide: Large ribosomal subunit protein uL15 (146 aa).

A disordered region spans residues 1–65 (MSDIQLNSLK…GQMPLQRRLP (65 aa)). A compositionally biased stretch (gly residues) spans 24–34 (RGIGSGLGKTA).

Belongs to the universal ribosomal protein uL15 family. Part of the 50S ribosomal subunit.

Functionally, binds to the 23S rRNA. The sequence is that of Large ribosomal subunit protein uL15 from Bordetella avium (strain 197N).